Consider the following 154-residue polypeptide: UPF0178 protein BAV3236 (154 aa).

The protein belongs to the UPF0178 family.

The sequence is that of UPF0178 protein BAV3236 from Bordetella avium (strain 197N).